The chain runs to 499 residues: Glutamyl-tRNA(Gln) amidotransferase subunit A, mitochondrial (499 aa).

Residues K61 and S139 each act as charge relay system in the active site. Residue S163 is the Acyl-ester intermediate of the active site.

The protein belongs to the amidase family. GatA subfamily. As to quaternary structure, subunit of the heterotrimeric GatCAB amidotransferase (AdT) complex, composed of A, B and C subunits.

Its subcellular location is the mitochondrion. It carries out the reaction L-glutamyl-tRNA(Gln) + L-glutamine + ATP + H2O = L-glutaminyl-tRNA(Gln) + L-glutamate + ADP + phosphate + H(+). Functionally, allows the formation of correctly charged Gln-tRNA(Gln) through the transamidation of misacylated Glu-tRNA(Gln) in the mitochondria. The reaction takes place in the presence of glutamine and ATP through an activated gamma-phospho-Glu-tRNA(Gln). The sequence is that of Glutamyl-tRNA(Gln) amidotransferase subunit A, mitochondrial from Coccidioides posadasii (strain C735) (Valley fever fungus).